A 166-amino-acid chain; its full sequence is Large ribosomal subunit protein uL10 (166 aa).

It belongs to the universal ribosomal protein uL10 family. As to quaternary structure, part of the ribosomal stalk of the 50S ribosomal subunit. The N-terminus interacts with L11 and the large rRNA to form the base of the stalk. The C-terminus forms an elongated spine to which L12 dimers bind in a sequential fashion forming a multimeric L10(L12)X complex.

Forms part of the ribosomal stalk, playing a central role in the interaction of the ribosome with GTP-bound translation factors. This Staphylococcus carnosus (strain TM300) protein is Large ribosomal subunit protein uL10.